We begin with the raw amino-acid sequence, 93 residues long: SH3 domain-binding glutamic acid-rich-like protein 3 (93 aa).

Ser2 carries the post-translational modification N-acetylserine. The region spanning 2–93 (SGLRVYSTSV…NTLQEFLKLA (92 aa)) is the Glutaredoxin domain. Thr9 carries O-linked (GalNAc...) threonine glycosylation.

Belongs to the SH3BGR family. Homodimer. Interacts with MYO1C (via its IQ motifs); the interaction is dependent on calcium and takes place at membrane ruffles. Post-translationally, may be glycosylated.

The protein resides in the cytoplasm. The protein localises to the cytosol. It is found in the cell projection. Its subcellular location is the ruffle membrane. It localises to the nucleus. In terms of biological role, could act as a modulator of glutaredoxin biological activity. May play a role in cytoskeleton organization. The protein is SH3 domain-binding glutamic acid-rich-like protein 3 (SH3BGRL3) of Bos taurus (Bovine).